The primary structure comprises 149 residues: 3-dehydroquinate dehydratase (149 aa).

The Proton acceptor role is filled by Y22. Substrate-binding residues include N73, H79, and D86. H99 functions as the Proton donor in the catalytic mechanism. Substrate contacts are provided by residues 100–101 (LS) and R110.

The protein belongs to the type-II 3-dehydroquinase family. Homododecamer.

It catalyses the reaction 3-dehydroquinate = 3-dehydroshikimate + H2O. Its pathway is metabolic intermediate biosynthesis; chorismate biosynthesis; chorismate from D-erythrose 4-phosphate and phosphoenolpyruvate: step 3/7. Catalyzes a trans-dehydration via an enolate intermediate. This chain is 3-dehydroquinate dehydratase, found in Prochlorococcus marinus (strain SARG / CCMP1375 / SS120).